The following is a 1462-amino-acid chain: Gag-Pro-Pol polyprotein (1462 aa).

Gly-2 is lipidated: N-myristoyl glycine; by host. The segment at 93 to 144 is disordered; the sequence is QIPSRPAPPPPSSPTHDPPDSDPQIPPPYVEPTAPQVLPVMHPHGAPPNHRP. Residue Ser-105 is modified to Phosphoserine; by host MAPK1. The short motif at 118–121 is the PPXY motif element; it reads PPPY. The PTAP/PSAP motif signature appears at 124 to 127; sequence PTAP. 2 consecutive CCHC-type zinc fingers follow at residues 355-372 and 378-395; these read QPCF…DCTQ and GPCP…DCPR. The Peptidase A2 domain occupies 476 to 554; sequence IEALLDTGAD…NNWAIIGRDA (79 aa). Asp-481 functions as the For protease activity; shared with dimeric partner in the catalytic mechanism. The Reverse transcriptase domain maps to 614–804; it reads LEAGHIEPYT…GTIKFLGQII (191 aa). Asp-680, Asp-755, Asp-756, Asp-1040, Glu-1074, Asp-1096, Asp-1157, Asp-1230, and Asp-1287 together coordinate Mg(2+). Residues 1031–1165 form the RNase H type-1 domain; that stretch reads INTAPCLFSD…TDALLITPVL (135 aa). The Integrase catalytic domain occupies 1219 to 1388; sequence RGLLPNHIWQ…QPIPETRSLS (170 aa). Residues 1393–1443 constitute a DNA-binding region (integrase-type); the sequence is HWYYFKLPGLNSRQWKGPQEALQEAAGAALIPVSASSAQWIPWRLLKRAAC.

In terms of assembly, homodimer; the homodimers are part of the immature particles. Interacts with human TSG101 and NEDD4; these interactions are essential for budding and release of viral particles. Homodimer; further assembles as homohexamers. Mg(2+) serves as cofactor. Post-translationally, phosphorylation of the matrix protein p19 by MAPK1 seems to play a role in budding. Myristoylated. Myristoylation of the matrix (MA) domain mediates the transport and binding of Gag polyproteins to the host plasma membrane and is required for the assembly of viral particles. In terms of processing, specific enzymatic cleavages by the viral protease yield mature proteins. The polyprotein is cleaved during and after budding, this process is termed maturation. The protease is autoproteolytically processed at its N- and C-termini.

The protein localises to the virion. The catalysed reaction is Endonucleolytic cleavage to 5'-phosphomonoester.. It catalyses the reaction DNA(n) + a 2'-deoxyribonucleoside 5'-triphosphate = DNA(n+1) + diphosphate. The matrix domain targets Gag, Gag-Pro and Gag-Pro-Pol polyproteins to the plasma membrane via a multipartite membrane binding signal, that includes its myristoylated N-terminus. Its function is as follows. Matrix protein. Functionally, forms the spherical core of the virus that encapsulates the genomic RNA-nucleocapsid complex. In terms of biological role, binds strongly to viral nucleic acids and promote their aggregation. Also destabilizes the nucleic acids duplexes via highly structured zinc-binding motifs. The aspartyl protease mediates proteolytic cleavages of Gag and Gag-Pol polyproteins during or shortly after the release of the virion from the plasma membrane. Cleavages take place as an ordered, step-wise cascade to yield mature proteins. This process is called maturation. Displays maximal activity during the budding process just prior to particle release from the cell. Cleaves the translation initiation factor eIF4G leading to the inhibition of host cap-dependent translation. Its function is as follows. RT is a multifunctional enzyme that converts the viral RNA genome into dsDNA in the cytoplasm, shortly after virus entry into the cell. This enzyme displays a DNA polymerase activity that can copy either DNA or RNA templates, and a ribonuclease H (RNase H) activity that cleaves the RNA strand of RNA-DNA heteroduplexes in a partially processive 3' to 5'-endonucleasic mode. Conversion of viral genomic RNA into dsDNA requires many steps. A tRNA-Pro binds to the primer-binding site (PBS) situated at the 5'-end of the viral RNA. RT uses the 3' end of the tRNA primer to perform a short round of RNA-dependent minus-strand DNA synthesis. The reading proceeds through the U5 region and ends after the repeated (R) region which is present at both ends of viral RNA. The portion of the RNA-DNA heteroduplex is digested by the RNase H, resulting in a ssDNA product attached to the tRNA primer. This ssDNA/tRNA hybridizes with the identical R region situated at the 3' end of viral RNA. This template exchange, known as minus-strand DNA strong stop transfer, can be either intra- or intermolecular. RT uses the 3' end of this newly synthesized short ssDNA to perform the RNA-dependent minus-strand DNA synthesis of the whole template. RNase H digests the RNA template except for a polypurine tract (PPT) situated at the 5' end of the genome. It is not clear if both polymerase and RNase H activities are simultaneous. RNase H probably can proceed both in a polymerase-dependent (RNA cut into small fragments by the same RT performing DNA synthesis) and a polymerase-independent mode (cleavage of remaining RNA fragments by free RTs). Secondly, RT performs DNA-directed plus-strand DNA synthesis using the PPT that has not been removed by RNase H as primer. PPT and tRNA primers are then removed by RNase H. The 3' and 5' ssDNA PBS regions hybridize to form a circular dsDNA intermediate. Strand displacement synthesis by RT to the PBS and PPT ends produces a blunt ended, linear dsDNA copy of the viral genome that includes long terminal repeats (LTRs) at both ends. Functionally, catalyzes viral DNA integration into the host chromosome, by performing a series of DNA cutting and joining reactions. The polypeptide is Gag-Pro-Pol polyprotein (gag-pro-pol) (Homo sapiens (Human)).